A 220-amino-acid chain; its full sequence is N-(5'-phosphoribosyl)anthranilate isomerase (220 aa).

It belongs to the TrpF family.

The enzyme catalyses N-(5-phospho-beta-D-ribosyl)anthranilate = 1-(2-carboxyphenylamino)-1-deoxy-D-ribulose 5-phosphate. The protein operates within amino-acid biosynthesis; L-tryptophan biosynthesis; L-tryptophan from chorismate: step 3/5. The chain is N-(5'-phosphoribosyl)anthranilate isomerase from Xylella fastidiosa (strain M23).